The following is a 488-amino-acid chain: Proline--tRNA ligase (488 aa).

This sequence belongs to the class-II aminoacyl-tRNA synthetase family. ProS type 3 subfamily. Homodimer.

Its subcellular location is the cytoplasm. The catalysed reaction is tRNA(Pro) + L-proline + ATP = L-prolyl-tRNA(Pro) + AMP + diphosphate. Catalyzes the attachment of proline to tRNA(Pro) in a two-step reaction: proline is first activated by ATP to form Pro-AMP and then transferred to the acceptor end of tRNA(Pro). The protein is Proline--tRNA ligase of Pyrobaculum arsenaticum (strain DSM 13514 / JCM 11321 / PZ6).